Consider the following 213-residue polypeptide: Cytidylate kinase (213 aa).

7 to 15 is a binding site for ATP; that stretch reads GPAASGKGT.

Belongs to the cytidylate kinase family. Type 1 subfamily.

Its subcellular location is the cytoplasm. The catalysed reaction is CMP + ATP = CDP + ADP. It carries out the reaction dCMP + ATP = dCDP + ADP. This Rhodospirillum rubrum (strain ATCC 11170 / ATH 1.1.1 / DSM 467 / LMG 4362 / NCIMB 8255 / S1) protein is Cytidylate kinase.